The following is a 140-amino-acid chain: Large ribosomal subunit protein uL11 (140 aa).

This sequence belongs to the universal ribosomal protein uL11 family. In terms of assembly, part of the ribosomal stalk of the 50S ribosomal subunit. Interacts with L10 and the large rRNA to form the base of the stalk. L10 forms an elongated spine to which L12 dimers bind in a sequential fashion forming a multimeric L10(L12)X complex. In terms of processing, one or more lysine residues are methylated.

Its function is as follows. Forms part of the ribosomal stalk which helps the ribosome interact with GTP-bound translation factors. In Nitratidesulfovibrio vulgaris (strain DSM 19637 / Miyazaki F) (Desulfovibrio vulgaris), this protein is Large ribosomal subunit protein uL11.